A 154-amino-acid polypeptide reads, in one-letter code: MMPTTLFAGTHITMTTVYHITVSQIQLSLLKVTAFQHQNSKKTTKLVVILRIGTQVLKTMSLYMAISPKFTTSLSLHKLLQTLVLKMLHSSSLTSLLKTHRMCKYTQSTALQELLIQQWIQFMMSRRRLLACLCKHKKVSTNLCTHSFRKKQVR.

Positions 80 to 138 (LQTLVLKMLHSSSLTSLLKTHRMCKYTQSTALQELLIQQWIQFMMSRRRLLACLCKHKK) are mitochondrial targeting signal. Residues 134-154 (CKHKKVSTNLCTHSFRKKQVR) form a nucleolar targeting region. Positions 135–153 (KHKKVSTNLCTHSFRKKQV) match the Bipartite nuclear localization signal motif.

In terms of assembly, interacts with host RUNX1 isoform b.

The protein localises to the host nucleus. Its subcellular location is the host nucleolus. It is found in the host mitochondrion. Induces host cell G0/G1 arrest and apoptosis. The protein is ORF3b protein of Homo sapiens (Human).